A 145-amino-acid chain; its full sequence is D-aminoacyl-tRNA deacylase (145 aa).

The Gly-cisPro motif, important for rejection of L-amino acids signature appears at 137–138 (GP).

This sequence belongs to the DTD family. In terms of assembly, homodimer.

The protein resides in the cytoplasm. It catalyses the reaction glycyl-tRNA(Ala) + H2O = tRNA(Ala) + glycine + H(+). The catalysed reaction is a D-aminoacyl-tRNA + H2O = a tRNA + a D-alpha-amino acid + H(+). Its function is as follows. An aminoacyl-tRNA editing enzyme that deacylates mischarged D-aminoacyl-tRNAs. Also deacylates mischarged glycyl-tRNA(Ala), protecting cells against glycine mischarging by AlaRS. Acts via tRNA-based rather than protein-based catalysis; rejects L-amino acids rather than detecting D-amino acids in the active site. By recycling D-aminoacyl-tRNA to D-amino acids and free tRNA molecules, this enzyme counteracts the toxicity associated with the formation of D-aminoacyl-tRNA entities in vivo and helps enforce protein L-homochirality. This is D-aminoacyl-tRNA deacylase from Enterobacter sp. (strain 638).